We begin with the raw amino-acid sequence, 510 residues long: ATP synthase subunit alpha (510 aa).

An ATP-binding site is contributed by glycine 170 to threonine 177.

It belongs to the ATPase alpha/beta chains family. As to quaternary structure, F-type ATPases have 2 components, CF(1) - the catalytic core - and CF(0) - the membrane proton channel. CF(1) has five subunits: alpha(3), beta(3), gamma(1), delta(1), epsilon(1). CF(0) has three main subunits: a(1), b(2) and c(9-12). The alpha and beta chains form an alternating ring which encloses part of the gamma chain. CF(1) is attached to CF(0) by a central stalk formed by the gamma and epsilon chains, while a peripheral stalk is formed by the delta and b chains.

Its subcellular location is the cell inner membrane. It catalyses the reaction ATP + H2O + 4 H(+)(in) = ADP + phosphate + 5 H(+)(out). Its function is as follows. Produces ATP from ADP in the presence of a proton gradient across the membrane. The alpha chain is a regulatory subunit. The polypeptide is ATP synthase subunit alpha (Caulobacter vibrioides (strain ATCC 19089 / CIP 103742 / CB 15) (Caulobacter crescentus)).